The sequence spans 953 residues: Coatomer subunit beta (953 aa).

7 HEAT repeats span residues 17-54 (DSEP…NGEK), 96-131 (QEMI…KEAE), 132-168 (LLEP…NFEH), 240-276 (SERA…SAPT), 277-314 (AIKA…HPSH), 316-353 (RVLQ…SRNV), and 396-433 (DMAA…RFDN).

Oligomeric complex that consists of at least the alpha, beta, beta', gamma, delta, epsilon and zeta subunits.

The protein localises to the cytoplasm. The protein resides in the golgi apparatus membrane. Its subcellular location is the cytoplasmic vesicle. It is found in the COPI-coated vesicle membrane. Functionally, the coatomer is a cytosolic protein complex that binds to dilysine motifs and reversibly associates with Golgi non-clathrin-coated vesicles, which further mediate biosynthetic protein transport from the ER, via the Golgi up to the trans Golgi network. Coatomer complex is required for budding from Golgi membranes, and is essential for the retrograde Golgi-to-ER transport of dilysine-tagged proteins. The polypeptide is Coatomer subunit beta (COPB1) (Gallus gallus (Chicken)).